The sequence spans 398 residues: MAKLTVKDVELKGKKVLVRVDFNVPIKDGVITNDNRITAALPTIKYILEQGGRAVLFSHLGRVKEEADKAGKSLAPVAKALSEKLGQDVVFPGTTRGAELEAAINELKDGEILLVENTRFEDIDGKKESKNDPELGKYWASLGDGIFVNDAFGTAHRAHASNVGISANVDKAVAGFLLENEIAYIQEAVEAPERPFVAILGGSKVSDKIGVIENLLSKADKVIIGGGMAYTFLKAQGYEIGTSLVEDDKLDLAKELLEKAAGKLILPLDHKVANAFAGYTEVKETADQNIPAGFMGLDVASKTIADYNTQLEGAKTVVWNGPVGVFENTDFQAGTVGLMEAIVKQPGVKSIIGGGDSAAAAINLGYADKFSWISTGGGASMELLEGKVLPGLAALTEK.

Substrate is bound by residues 21-23 (DFN), Arg36, 59-62 (HLGR), Arg119, and Arg157. Residues Lys208, Gly296, Glu327, and 354–357 (GGDS) contribute to the ATP site.

It belongs to the phosphoglycerate kinase family. Monomer.

The protein localises to the cytoplasm. The enzyme catalyses (2R)-3-phosphoglycerate + ATP = (2R)-3-phospho-glyceroyl phosphate + ADP. The protein operates within carbohydrate degradation; glycolysis; pyruvate from D-glyceraldehyde 3-phosphate: step 2/5. This chain is Phosphoglycerate kinase (pgk), found in Lactococcus lactis subsp. lactis (strain IL1403) (Streptococcus lactis).